A 162-amino-acid polypeptide reads, in one-letter code: Photosystem II extrinsic protein V (162 aa).

The first 26 residues, 1–26 (MLKRYMLLAVATVFFAFQVLTSTATA), serve as a signal peptide directing secretion. Heme c-binding residues include Cys-62, Cys-65, His-66, and His-117.

Belongs to the cytochrome c family. PsbV subfamily. PSII is composed of 1 copy each of membrane proteins PsbA, PsbB, PsbC, PsbD, PsbE, PsbF, PsbH, PsbI, PsbJ, PsbK, PsbL, PsbM, PsbT, PsbX, PsbY, PsbZ, Psb30/Ycf12, peripheral proteins PsbO, CyanoQ (PsbQ), PsbU, PsbV and a large number of cofactors. It forms dimeric complexes. Requires heme c as cofactor.

Its subcellular location is the cellular thylakoid membrane. One of the extrinsic, lumenal subunits of photosystem II (PSII). PSII is a light-driven water plastoquinone oxidoreductase, using light energy to abstract electrons from H(2)O, generating a proton gradient subsequently used for ATP formation. The extrinsic proteins stabilize the structure of photosystem II oxygen-evolving complex (OEC), the ion environment of oxygen evolution and protect the OEC against heat-induced inactivation. Low-potential cytochrome c that plays a role in the OEC of PSII. In Acaryochloris marina (strain MBIC 11017), this protein is Photosystem II extrinsic protein V.